Reading from the N-terminus, the 291-residue chain is Mitochondrial thiamine pyrophosphate carrier 1 (291 aa).

6 helical membrane-spanning segments follow: residues 12-31, 83-99, 120-141, 167-191, 214-230, and 265-282; these read GATASVYHTLVAGSVSGAVA, IMYILYGATQFTSYSMF, SLIVGTSAGLTSLIVTYPFDLL, GGLAGLYMGAKPTLLSLGLNSGLMF, FCGFFAGASSKGITFPL, and GFGISLIKTAPTSAVSLF. Solcar repeat units follow at residues 15–102, 115–200, and 207–290; these read ASVY…FSKA, RPSN…AREV, and NIPF…VLNG.

Belongs to the mitochondrial carrier (TC 2.A.29) family.

It localises to the mitochondrion inner membrane. Functionally, mitochondrial transporter that mediates uptake of thiamine pyrophosphate (ThPP) into mitochondria. The sequence is that of Mitochondrial thiamine pyrophosphate carrier 1 (TPC1) from Meyerozyma guilliermondii (strain ATCC 6260 / CBS 566 / DSM 6381 / JCM 1539 / NBRC 10279 / NRRL Y-324) (Yeast).